Reading from the N-terminus, the 103-residue chain is Large ribosomal subunit protein bL21 (103 aa).

It belongs to the bacterial ribosomal protein bL21 family. In terms of assembly, part of the 50S ribosomal subunit. Contacts protein L20.

In terms of biological role, this protein binds to 23S rRNA in the presence of protein L20. The protein is Large ribosomal subunit protein bL21 of Psychrobacter arcticus (strain DSM 17307 / VKM B-2377 / 273-4).